Here is a 1183-residue protein sequence, read N- to C-terminus: DNA-directed RNA polymerase subunit beta (1183 aa).

Belongs to the RNA polymerase beta chain family. In terms of assembly, the RNAP catalytic core consists of 2 alpha, 1 beta, 1 beta' and 1 omega subunit. When a sigma factor is associated with the core the holoenzyme is formed, which can initiate transcription.

The catalysed reaction is RNA(n) + a ribonucleoside 5'-triphosphate = RNA(n+1) + diphosphate. Its function is as follows. DNA-dependent RNA polymerase catalyzes the transcription of DNA into RNA using the four ribonucleoside triphosphates as substrates. The polypeptide is DNA-directed RNA polymerase subunit beta (Staphylococcus aureus (strain JH9)).